A 106-amino-acid polypeptide reads, in one-letter code: Small ribosomal subunit protein bS18 (106 aa).

Residues 1–41 (MAEEHSNQRSQTFNGERTNRPSRKPRGDGERRGRRQGGRRR) are disordered.

It belongs to the bacterial ribosomal protein bS18 family. As to quaternary structure, part of the 30S ribosomal subunit. Forms a tight heterodimer with protein bS6.

Binds as a heterodimer with protein bS6 to the central domain of the 16S rRNA, where it helps stabilize the platform of the 30S subunit. The protein is Small ribosomal subunit protein bS18 of Oenococcus oeni (strain ATCC BAA-331 / PSU-1).